The sequence spans 445 residues: 6-phosphogluconate dehydrogenase, decarboxylating (445 aa).

Residues 1 to 4, 22 to 24, 63 to 65, and N91 contribute to the NADP(+) site; these read AVMG, NRS, and VKA. Substrate is bound by residues N91 and 117 to 119; that span reads SGG. K172 serves as the catalytic Proton acceptor. A substrate-binding site is contributed by 175–176; it reads HN. The Proton donor role is filled by E179. Residues Y180, K249, R276, R434, and H440 each contribute to the substrate site.

This sequence belongs to the 6-phosphogluconate dehydrogenase family. Homodimer.

The catalysed reaction is 6-phospho-D-gluconate + NADP(+) = D-ribulose 5-phosphate + CO2 + NADPH. The protein operates within carbohydrate degradation; pentose phosphate pathway; D-ribulose 5-phosphate from D-glucose 6-phosphate (oxidative stage): step 3/3. Catalyzes the oxidative decarboxylation of 6-phosphogluconate to ribulose 5-phosphate and CO(2), with concomitant reduction of NADP to NADPH. This is 6-phosphogluconate dehydrogenase, decarboxylating (gnd) from Shigella dysenteriae.